The primary structure comprises 224 residues: Mammalian ependymin-related protein 1 (224 aa).

A signal peptide spans 1–37; sequence MPGRAPLRTVPGALGAWLLGGLWAWTLCGLCSLGAVG. Disulfide bonds link C42-C172, C88-C222, and C113-C210. N130 and N182 each carry an N-linked (GlcNAc...) asparagine glycan.

The protein belongs to the ependymin family. Homodimer. N-glycosylated; the glycan contains mannose-6-phosphate moieties. In terms of tissue distribution, ubiquitous. Detected in brain, heart, skeletal muscle, kidney, testis, ovary and prostate.

The protein localises to the lysosome lumen. The protein resides in the secreted. In terms of biological role, binds anionic lipids and gangliosides at acidic pH. The chain is Mammalian ependymin-related protein 1 (EPDR1) from Homo sapiens (Human).